The chain runs to 123 residues: Small ribosomal subunit protein uS13 (123 aa).

Residues 97-123 (PVRGQKTKTNARTRKGPKKTVGRKKKK) form a disordered region. Positions 101–123 (QKTKTNARTRKGPKKTVGRKKKK) are enriched in basic residues.

It belongs to the universal ribosomal protein uS13 family. In terms of assembly, part of the 30S ribosomal subunit. Forms a loose heterodimer with protein S19. Forms two bridges to the 50S subunit in the 70S ribosome.

Located at the top of the head of the 30S subunit, it contacts several helices of the 16S rRNA. In the 70S ribosome it contacts the 23S rRNA (bridge B1a) and protein L5 of the 50S subunit (bridge B1b), connecting the 2 subunits; these bridges are implicated in subunit movement. Contacts the tRNAs in the A and P-sites. The polypeptide is Small ribosomal subunit protein uS13 (Alkaliphilus oremlandii (strain OhILAs) (Clostridium oremlandii (strain OhILAs))).